An 884-amino-acid polypeptide reads, in one-letter code: Protein P (884 aa).

The segment at 1–184 (MHPFSRLFRN…GKPYSWEHRQ (184 aa)) is terminal protein domain (TP). The segment at 185–387 (LVQHNGQQHK…YCIHHIVSSL (203 aa)) is spacer. A disordered region spans residues 299–345 (RNSGHTTWFSSASNSNKSRSREKAYSSNSTSKRYSPPLNYEKSDFSS). Residues 388–729 (DDWGPCTVTG…YEELWPVVRQ (342 aa)) are polymerase/reverse transcriptase domain (RT). The region spanning 398-639 (DVTIKSPRTP…NHLHFMGYVI (242 aa)) is the Reverse transcriptase domain. Asp-470, Asp-590, and Asp-591 together coordinate Mg(2+).

This sequence belongs to the hepadnaviridae P protein family.

The enzyme catalyses DNA(n) + a 2'-deoxyribonucleoside 5'-triphosphate = DNA(n+1) + diphosphate. It catalyses the reaction Endonucleolytic cleavage to 5'-phosphomonoester.. With respect to regulation, activated by host HSP70 and HSP40 in vitro to be able to bind the epsilon loop of the pgRNA. Because deletion of the RNase H region renders the protein partly chaperone-independent, the chaperones may be needed indirectly to relieve occlusion of the RNA-binding site by this domain. Inhibited by several reverse-transcriptase inhibitors: Lamivudine, Adefovir and Entecavir. Its function is as follows. Multifunctional enzyme that converts the viral RNA genome into dsDNA in viral cytoplasmic capsids. This enzyme displays a DNA polymerase activity that can copy either DNA or RNA templates, and a ribonuclease H (RNase H) activity that cleaves the RNA strand of RNA-DNA heteroduplexes in a partially processive 3'- to 5'-endonucleasic mode. Neo-synthesized pregenomic RNA (pgRNA) are encapsidated together with the P protein, and reverse-transcribed inside the nucleocapsid. Initiation of reverse-transcription occurs first by binding the epsilon loop on the pgRNA genome, and is initiated by protein priming, thereby the 5'-end of (-)DNA is covalently linked to P protein. Partial (+)DNA is synthesized from the (-)DNA template and generates the relaxed circular DNA (RC-DNA) genome. After budding and infection, the RC-DNA migrates in the nucleus, and is converted into a plasmid-like covalently closed circular DNA (cccDNA). The activity of P protein does not seem to be necessary for cccDNA generation, and is presumably released from (+)DNA by host nuclear DNA repair machinery. In Woodchuck hepatitis B virus (isolate 7) (WHV), this protein is Protein P.